A 1027-amino-acid chain; its full sequence is 2-oxoglutarate dehydrogenase, mitochondrial (1027 aa).

Positions 315, 413, 446, 448, and 674 each coordinate thiamine diphosphate. Positions 413, 446, and 448 each coordinate Mg(2+).

The protein belongs to the alpha-ketoglutarate dehydrogenase family. As to quaternary structure, homodimer. Component of the 2-oxoglutarate dehydrogenase complex. It depends on thiamine diphosphate as a cofactor. The cofactor is Mg(2+).

It is found in the mitochondrion matrix. It carries out the reaction N(6)-[(R)-lipoyl]-L-lysyl-[protein] + 2-oxoglutarate + H(+) = N(6)-[(R)-S(8)-succinyldihydrolipoyl]-L-lysyl-[protein] + CO2. Functionally, the 2-oxoglutarate dehydrogenase complex catalyzes the overall conversion of 2-oxoglutarate to succinyl-CoA and CO(2). It contains multiple copies of three enzymatic components: 2-oxoglutarate dehydrogenase (E1), dihydrolipoamide succinyltransferase (E2) and lipoamide dehydrogenase (E3). This is 2-oxoglutarate dehydrogenase, mitochondrial (ogdh-1) from Caenorhabditis briggsae.